Reading from the N-terminus, the 140-residue chain is MSKRGRGGTSGNKFRMSLGLPVAATVNCADNTGAKNLYIISVKGIKGRLNRLPSACVGDMVMATVKKGKPDLRKKVLPAVIVRQRKPWRRKDGVFMYFEDNAGVIVNPKGEMKGSAITGPIGKECADLWPRIASAANAIV.

Belongs to the universal ribosomal protein uL14 family.

In Arabidopsis thaliana (Mouse-ear cress), this protein is Large ribosomal subunit protein uL14x/uL14z/uL14y (RPL23A).